Reading from the N-terminus, the 225-residue chain is Small ribosomal subunit protein uS3 (225 aa).

The KH type-2 domain occupies leucine 38–arginine 106.

This sequence belongs to the universal ribosomal protein uS3 family. In terms of assembly, part of the 30S ribosomal subunit. Forms a tight complex with proteins S10 and S14.

Binds the lower part of the 30S subunit head. Binds mRNA in the 70S ribosome, positioning it for translation. The sequence is that of Small ribosomal subunit protein uS3 from Rhodospirillum centenum (strain ATCC 51521 / SW).